Consider the following 377-residue polypeptide: UPF0754 membrane protein GK0639 (377 aa).

Transmembrane regions (helical) follow at residues 7 to 27 (LLFM…IAIV) and 357 to 377 (YLGA…GLWL).

The protein belongs to the UPF0754 family.

Its subcellular location is the cell membrane. The chain is UPF0754 membrane protein GK0639 from Geobacillus kaustophilus (strain HTA426).